A 146-amino-acid polypeptide reads, in one-letter code: Hemoglobin subunit beta (146 aa).

Residues 2–146 (QWSESERTII…VVSALGKQYH (145 aa)) form the Globin domain. 2 residues coordinate heme b: His63 and His92.

This sequence belongs to the globin family. Heterotetramer of two alpha chains and two beta chains. As to expression, red blood cells.

Involved in oxygen transport from gills to the various peripheral tissues. The protein is Hemoglobin subunit beta (hbb) of Pogonophryne scotti (Saddleback plunderfish).